The primary structure comprises 453 residues: Probable glycine dehydrogenase (decarboxylating) subunit 1 (453 aa).

Belongs to the GcvP family. N-terminal subunit subfamily. In terms of assembly, the glycine cleavage system is composed of four proteins: P, T, L and H. In this organism, the P 'protein' is a heterodimer of two subunits.

It carries out the reaction N(6)-[(R)-lipoyl]-L-lysyl-[glycine-cleavage complex H protein] + glycine + H(+) = N(6)-[(R)-S(8)-aminomethyldihydrolipoyl]-L-lysyl-[glycine-cleavage complex H protein] + CO2. In terms of biological role, the glycine cleavage system catalyzes the degradation of glycine. The P protein binds the alpha-amino group of glycine through its pyridoxal phosphate cofactor; CO(2) is released and the remaining methylamine moiety is then transferred to the lipoamide cofactor of the H protein. In Nitrosomonas europaea (strain ATCC 19718 / CIP 103999 / KCTC 2705 / NBRC 14298), this protein is Probable glycine dehydrogenase (decarboxylating) subunit 1.